The following is a 945-amino-acid chain: Kinesin-like protein CIN8 (945 aa).

The region spanning 22–409 (NITVAVRCRG…LEYAAKAKNI (388 aa)) is the Kinesin motor domain. 114–121 (GMTSTGKT) lines the ATP pocket. The interval 190–243 (IFDSSSMNHSSRASSQSNSPREPEVAHNGFSRRRQRPPPVKANRMSATKQQLSE) is disordered. The segment covering 193 to 208 (SSSMNHSSRASSQSNS) has biased composition (low complexity). The segment covering 234–243 (MSATKQQLSE) has biased composition (polar residues). 2 coiled-coil regions span residues 450 to 562 (MSHE…DIKE) and 634 to 675 (LKEF…YLDQ).

This sequence belongs to the TRAFAC class myosin-kinesin ATPase superfamily. Kinesin family. BimC subfamily.

The protein resides in the cytoplasm. The protein localises to the cytoskeleton. It is found in the spindle. Elongates the mitotic spindle by interacting with spindle microtubules to generate an outward force pushing spindle poles apart. Following spindle assembly, CIN8 and KIP1 apparently act to oppose a force, possibly generated by KAR3, that draws separated poles back together. This Eremothecium gossypii (strain ATCC 10895 / CBS 109.51 / FGSC 9923 / NRRL Y-1056) (Yeast) protein is Kinesin-like protein CIN8 (CIN8).